The following is a 99-amino-acid chain: Malonate decarboxylase acyl carrier protein (99 aa).

Residue Ser25 is modified to O-(phosphoribosyl dephospho-coenzyme A)serine.

This sequence belongs to the MdcC family. Covalently binds the prosthetic group of malonate decarboxylase.

The protein localises to the cytoplasm. Subunit of malonate decarboxylase, it is an acyl carrier protein to which acetyl and malonyl thioester residues are bound via a 2'-(5''-phosphoribosyl)-3'-dephospho-CoA prosthetic group and turn over during the catalytic mechanism. The protein is Malonate decarboxylase acyl carrier protein of Pseudomonas savastanoi pv. phaseolicola (strain 1448A / Race 6) (Pseudomonas syringae pv. phaseolicola (strain 1448A / Race 6)).